The following is a 240-amino-acid chain: Purine nucleoside phosphorylase DeoD-type (240 aa).

Residue His-5 participates in a purine D-ribonucleoside binding. Residues Gly-21, Arg-25, Arg-44, and 88–91 (RVGS) contribute to the phosphate site. Residues 180 to 182 (EME) and 204 to 205 (SD) each bind a purine D-ribonucleoside. The active-site Proton donor is the Asp-205.

This sequence belongs to the PNP/UDP phosphorylase family. As to quaternary structure, homohexamer; trimer of homodimers.

The catalysed reaction is a purine D-ribonucleoside + phosphate = a purine nucleobase + alpha-D-ribose 1-phosphate. The enzyme catalyses a purine 2'-deoxy-D-ribonucleoside + phosphate = a purine nucleobase + 2-deoxy-alpha-D-ribose 1-phosphate. In terms of biological role, catalyzes the reversible phosphorolytic breakdown of the N-glycosidic bond in the beta-(deoxy)ribonucleoside molecules, with the formation of the corresponding free purine bases and pentose-1-phosphate. The protein is Purine nucleoside phosphorylase DeoD-type of Actinobacillus pleuropneumoniae serotype 5b (strain L20).